Here is a 164-residue protein sequence, read N- to C-terminus: Phosphopantetheine adenylyltransferase (164 aa).

Ser9 contributes to the substrate binding site. ATP contacts are provided by residues 9-10 (SF) and His17. Residues Lys41, Val78, and Arg92 each coordinate substrate. Residues 93-95 (GLR), Glu103, and 128-134 (VRTITAT) contribute to the ATP site.

It belongs to the bacterial CoaD family. In terms of assembly, homohexamer. Requires Mg(2+) as cofactor.

The protein resides in the cytoplasm. It catalyses the reaction (R)-4'-phosphopantetheine + ATP + H(+) = 3'-dephospho-CoA + diphosphate. It participates in cofactor biosynthesis; coenzyme A biosynthesis; CoA from (R)-pantothenate: step 4/5. Functionally, reversibly transfers an adenylyl group from ATP to 4'-phosphopantetheine, yielding dephospho-CoA (dPCoA) and pyrophosphate. The polypeptide is Phosphopantetheine adenylyltransferase (Brucella suis (strain ATCC 23445 / NCTC 10510)).